We begin with the raw amino-acid sequence, 296 residues long: Urease accessory protein UreD (296 aa).

The protein belongs to the UreD family. As to quaternary structure, ureD, UreF and UreG form a complex that acts as a GTP-hydrolysis-dependent molecular chaperone, activating the urease apoprotein by helping to assemble the nickel containing metallocenter of UreC. The UreE protein probably delivers the nickel.

It is found in the cytoplasm. Functionally, required for maturation of urease via the functional incorporation of the urease nickel metallocenter. This chain is Urease accessory protein UreD, found in Nitrosococcus oceani (strain ATCC 19707 / BCRC 17464 / JCM 30415 / NCIMB 11848 / C-107).